The sequence spans 216 residues: Putative ripening-related protein 4 (216 aa).

The first 25 residues, 1–25 (MAANVKVLVVLALLQLMSLHAVVHG), serve as a signal peptide directing secretion.

The protein belongs to the kiwellin family.

It is found in the secreted. The chain is Putative ripening-related protein 4 from Oryza sativa subsp. japonica (Rice).